The chain runs to 113 residues: Small ribosomal subunit protein eS24 (113 aa).

Belongs to the eukaryotic ribosomal protein eS24 family.

This chain is Small ribosomal subunit protein eS24, found in Metallosphaera sedula (strain ATCC 51363 / DSM 5348 / JCM 9185 / NBRC 15509 / TH2).